The chain runs to 464 residues: ATP synthase subunit beta (464 aa).

153-160 (GGAGVGKT) serves as a coordination point for ATP.

It belongs to the ATPase alpha/beta chains family. F-type ATPases have 2 components, CF(1) - the catalytic core - and CF(0) - the membrane proton channel. CF(1) has five subunits: alpha(3), beta(3), gamma(1), delta(1), epsilon(1). CF(0) has three main subunits: a(1), b(2) and c(9-12). The alpha and beta chains form an alternating ring which encloses part of the gamma chain. CF(1) is attached to CF(0) by a central stalk formed by the gamma and epsilon chains, while a peripheral stalk is formed by the delta and b chains.

It is found in the cell inner membrane. The catalysed reaction is ATP + H2O + 4 H(+)(in) = ADP + phosphate + 5 H(+)(out). Functionally, produces ATP from ADP in the presence of a proton gradient across the membrane. The catalytic sites are hosted primarily by the beta subunits. The sequence is that of ATP synthase subunit beta from Burkholderia vietnamiensis (strain G4 / LMG 22486) (Burkholderia cepacia (strain R1808)).